The following is a 121-amino-acid chain: MNCFKILHRIKTGKEGFMVFYISLFLILWLAAGFAVGMKQVYVDQLFDKAVIERLEKEANDHGHADRMIKQRVLYIAAVTVSGFISVYYEMKTIPQRRNIRKIEKNIMKLNQAKKRRMKRK.

2 helical membrane passes run 16–36 (GFMVFYISLFLILWLAAGFAV) and 74–94 (LYIAAVTVSGFISVYYEMKTI).

It localises to the cell membrane. This is an uncharacterized protein from Bacillus subtilis (strain 168).